The chain runs to 723 residues: Polyribonucleotide nucleotidyltransferase (723 aa).

Mg(2+) contacts are provided by D488 and D494. The 60-residue stretch at 555-614 (PKIITLNIKPEKIKDVIGPGGKQINAIIDETGVKIDIEQDGTVYIASQDQAMNRKAIAII) folds into the KH domain. The 69-residue stretch at 624–692 (GEVYTGKVRR…QQGRVNLSRK (69 aa)) folds into the S1 motif domain. The interval 692-723 (KALLEKKEQPEGDKKPQAEKKFYPKTKKPESK) is disordered. A compositionally biased stretch (basic and acidic residues) spans 693–723 (ALLEKKEQPEGDKKPQAEKKFYPKTKKPESK).

It belongs to the polyribonucleotide nucleotidyltransferase family. Requires Mg(2+) as cofactor.

The protein localises to the cytoplasm. It catalyses the reaction RNA(n+1) + phosphate = RNA(n) + a ribonucleoside 5'-diphosphate. Involved in mRNA degradation. Catalyzes the phosphorolysis of single-stranded polyribonucleotides processively in the 3'- to 5'-direction. In Listeria monocytogenes serotype 4a (strain HCC23), this protein is Polyribonucleotide nucleotidyltransferase.